A 339-amino-acid chain; its full sequence is MLSYSLLLLALAFPAGHAGSCEQASISEKKEKILNLLACWTEGNADNSLSRSGGSPTGDMNYGYRSCNEIKSSDSRAPDGIYTLATEDGESYQTFCDMTTNGGGWTLVASVHENNMFGKCTVGDRWSTQQGNMLQNPEGDGNWANYATFGLPEGATSDDYKNPGYYDIEAKNLALWHVPNKTPMVMWRNSSILRYRTQNGFLTEEGGNLFELYKKYPVKYDIGKCLADNGPAVPVVYDLGSAEKTASLYSPNGRSEFTPGFVQFRAVNSERATLALCAGVKVKGCNVEHHCIGGGGYIPEGSPRQCGDFAALDWDGYGTNLGWSASKQIIEAAVMLFYR.

The N-terminal stretch at 1–18 is a signal peptide; it reads MLSYSLLLLALAFPAGHA. The Fibrinogen C-terminal domain maps to 58–108; the sequence is GDMNYGYRSCNEIKSSDSRAPDGIYTLATEDGESYQTFCDMTTNGGGWTLV. Cysteine 67 and cysteine 96 are oxidised to a cystine. 7 residues coordinate Ca(2+): histidine 112, glutamate 113, asparagine 115, glycine 118, glycine 123, aspartate 124, and aspartate 159. 3 cysteine pairs are disulfide-bonded: cysteine 120–cysteine 306, cysteine 225–cysteine 285, and cysteine 277–cysteine 291. N-linked (GlcNAc...) asparagine glycosylation occurs at asparagine 189. Residues asparagine 286, glutamate 288, glutamate 300, and aspartate 308 each coordinate Ca(2+). A carbohydrate contacts are provided by residues 288 to 289 and glutamate 300; that span reads EH.

Homotrimer; disulfide-linked. Homohexamer; disulfide-linked. Forms primarily homotrimers in solution, but can also form homohexamers. Post-translationally, N-glycosylated.

It is found in the secreted. The protein resides in the cytoplasmic vesicle. Its subcellular location is the secretory vesicle. Its function is as follows. Lectin that specifically recognizes microbial carbohydrate chains in a calcium-dependent manner. Binds to microbial glycans that contain a terminal acyclic 1,2-diol moiety, including beta-linked D-galactofuranose (beta-Galf) and D-phosphoglycerol-modified glycans. Binds to S.pneumoniae serotypes with glycans that contain beta-linked D-galactofuranose (beta-Galf) and with D-phosphoglycerol-modified glycans. Can bind a variety of monosaccharides (in vitro). Probably plays a role in the defense system against microorganisms. The sequence is that of Intelectin-1 (itln1) from Xenopus laevis (African clawed frog).